The chain runs to 170 residues: F1 capsule antigen (170 aa).

The first 21 residues, 1-21, serve as a signal peptide directing secretion; it reads MKKISSVIAIALFGTIATANA. Residues 100-150 are contains potential antigenic determinants that may stimulate T-cells; it reads GNNHQFTTKVIGKDSRDFDISPKVNGENLVGDDVVLATGSQDFFVRSIGSK.

The protein resides in the secreted. Its subcellular location is the capsule. This chain is F1 capsule antigen (caf1), found in Yersinia pestis.